The following is a 428-amino-acid chain: Cytokine-dependent hematopoietic cell linker (428 aa).

The interval 1–22 is disordered; sequence MNRQGNRKTTKEGSNDLKFQNF. Phosphotyrosine; by LYN occurs at positions 69 and 96. Disordered regions lie at residues 135–198 and 244–271; these read DKPI…EVQR and SSSFTTSNHSVQNRDHRGGMQPCSPQRC. Residues 159–164 are mediates interaction with PLCG1; essential for BCR signaling; involved in restoration of BCR-induced calcium response and ERK2 and JNK2 activation in BLNK-deficient cells expressing LAT; it reads PLPPPR. Residues 178 to 180 are mediates interaction with LAT, GRB2, and FGR; involved in translocation to the glycolipid-enriched microdomain and restoration of BCR-induced calcium response in BLNK-deficient DT40 cells expressing LAT; sequence PEP. Residues 244–253 are compositionally biased toward low complexity; that stretch reads SSSFTTSNHS. The SH2 domain occupies 309 to 419; it reads WYIGEYSRQA…RKQCHLTQPL (111 aa).

As to quaternary structure, when phosphorylated, interacts with PLCG1, PLCG2, GRB2, VAV and LAT. Interacts with LBR and AGO2. Interacts with FGR. Part of a complex consisting of CLNK, SKAP1 and FYB1. Interacts (via SH2 domain) with FYB1; this interaction allows SKAP1 and FYB1 to promote tyrosine phosphorylation of CLNK by LYN. Interacts (via SH2 domain) with MAP4K1. Tyrosine-phosphorylated upon BCR cross-linking. Tyrosine phosphorylation at both Tyr-69 and Tyr-96 are required for BCR-induced calcium response and are essential to restore PLCG2-mediated signaling in BLNK-deficient DT40 cells, but this phosphorylation is dispensable in cells expressing LAT. Interacts with the SH2 domain of PLCG1 via phosphorylated Tyr-96. Tyrosine phosphorylation is increased when complexed with SKAP1 and FYB1.

Its subcellular location is the cytoplasm. An adapter protein which plays a role in the regulation of immunoreceptor signaling, including PLC-gamma-mediated B-cell antigen receptor (BCR) signaling and FC-epsilon R1-mediated mast cell degranulation. Together with FGR, it acts as a negative regulator of natural killer cell-activating receptors and inhibits interferon-gamma production. Acts as a positive regulator of both T-cell receptor and natural killer T (NKT) cell receptor signaling in CD4-positive NKT cells. Together with MAP4K1, it enhances CD3-triggered activation of T-cells and subsequent IL2 production. May be involved in tumor necrosis factor induced cell death by promoting reactive oxidative species generation, and MLKL oligomerization, ultimately leading to necrosis. Involved in phosphorylation of LAT. May be involved in high affinity immunoglobulin epsilon receptor signaling in mast cells. The protein is Cytokine-dependent hematopoietic cell linker (CLNK) of Homo sapiens (Human).